A 93-amino-acid polypeptide reads, in one-letter code: MSLKEVITSLKNDFHSINKEIDSMKENNEKQEEKIFQEIKKLKLEMELLRKDNLSFKTTIQSLSDSINSLSSVESTYDSDIYYNDDEYSTIYL.

The stretch at 2–58 (SLKEVITSLKNDFHSINKEIDSMKENNEKQEEKIFQEIKKLKLEMELLRKDNLSFKT) forms a coiled coil.

This sequence belongs to the UPF0521 family.

The sequence is that of UPF0521 protein B from Dictyostelium discoideum (Social amoeba).